Reading from the N-terminus, the 126-residue chain is UPF0325 protein PBPRA2971 (126 aa).

This sequence belongs to the UPF0325 family.

The polypeptide is UPF0325 protein PBPRA2971 (Photobacterium profundum (strain SS9)).